We begin with the raw amino-acid sequence, 224 residues long: Large ribosomal subunit protein uL4 (224 aa).

The segment at 52–109 is disordered; the sequence is AAARQGTHSTKTRGDVSGGGRKPYRQKGTGRARQGSTRAPQFTGGGVVHGPKPRDYSQ.

This sequence belongs to the universal ribosomal protein uL4 family. As to quaternary structure, part of the 50S ribosomal subunit.

Functionally, one of the primary rRNA binding proteins, this protein initially binds near the 5'-end of the 23S rRNA. It is important during the early stages of 50S assembly. It makes multiple contacts with different domains of the 23S rRNA in the assembled 50S subunit and ribosome. In terms of biological role, forms part of the polypeptide exit tunnel. This Mycobacterium marinum (strain ATCC BAA-535 / M) protein is Large ribosomal subunit protein uL4.